Reading from the N-terminus, the 138-residue chain is MLQPKRRKYRKEQKGRNTGKATRGNAVSFGDFGLKAIGRGRLTARQIEAARRAMTRHIKRGGRIWIRIFPDKPISQKPAEVRMGNGKGNPEYYVAEIQPGKMLYEMDGVTEELAREAFRLAAAKLPLKTAFIVRQLGA.

The segment covering 1 to 13 (MLQPKRRKYRKEQ) has biased composition (basic residues). The segment at 1–24 (MLQPKRRKYRKEQKGRNTGKATRG) is disordered.

It belongs to the universal ribosomal protein uL16 family. As to quaternary structure, part of the 50S ribosomal subunit.

In terms of biological role, binds 23S rRNA and is also seen to make contacts with the A and possibly P site tRNAs. The chain is Large ribosomal subunit protein uL16 from Burkholderia ambifaria (strain ATCC BAA-244 / DSM 16087 / CCUG 44356 / LMG 19182 / AMMD) (Burkholderia cepacia (strain AMMD)).